A 188-amino-acid polypeptide reads, in one-letter code: Elongation factor P (188 aa).

N6-(3,6-diaminohexanoyl)-5-hydroxylysine is present on K34.

It belongs to the elongation factor P family. May be beta-lysylated on the epsilon-amino group of Lys-34 by the combined action of EpmA and EpmB, and then hydroxylated on the C5 position of the same residue by EpmC (if this protein is present). Lysylation is critical for the stimulatory effect of EF-P on peptide-bond formation. The lysylation moiety may extend toward the peptidyltransferase center and stabilize the terminal 3-CCA end of the tRNA. Hydroxylation of the C5 position on Lys-34 may allow additional potential stabilizing hydrogen-bond interactions with the P-tRNA.

It is found in the cytoplasm. Its pathway is protein biosynthesis; polypeptide chain elongation. Its function is as follows. Involved in peptide bond synthesis. Alleviates ribosome stalling that occurs when 3 or more consecutive Pro residues or the sequence PPG is present in a protein, possibly by augmenting the peptidyl transferase activity of the ribosome. Modification of Lys-34 is required for alleviation. This chain is Elongation factor P, found in Stenotrophomonas maltophilia (strain R551-3).